A 434-amino-acid chain; its full sequence is D-amino acid dehydrogenase (434 aa).

3–17 (VLVLGSGVIGTTSAW) contacts FAD.

This sequence belongs to the DadA oxidoreductase family. FAD serves as cofactor.

It carries out the reaction a D-alpha-amino acid + A + H2O = a 2-oxocarboxylate + AH2 + NH4(+). It functions in the pathway amino-acid degradation; D-alanine degradation; NH(3) and pyruvate from D-alanine: step 1/1. Functionally, oxidative deamination of D-amino acids. This Stenotrophomonas maltophilia (strain R551-3) protein is D-amino acid dehydrogenase.